A 37-amino-acid chain; its full sequence is MVEPLLSGIVLGLVPITITGLLVTAYLQYRRGDSLNF.

The helical transmembrane segment at L5–A25 threads the bilayer.

The protein belongs to the PetG family. The 4 large subunits of the cytochrome b6-f complex are cytochrome b6, subunit IV (17 kDa polypeptide, PetD), cytochrome f and the Rieske protein, while the 4 small subunits are PetG, PetL, PetM and PetN. The complex functions as a dimer.

The protein localises to the plastid. The protein resides in the chloroplast thylakoid membrane. In terms of biological role, component of the cytochrome b6-f complex, which mediates electron transfer between photosystem II (PSII) and photosystem I (PSI), cyclic electron flow around PSI, and state transitions. PetG is required for either the stability or assembly of the cytochrome b6-f complex. The protein is Cytochrome b6-f complex subunit 5 of Tupiella akineta (Green alga).